We begin with the raw amino-acid sequence, 563 residues long: Heat shock 70 kDa protein 8 (563 aa).

A disordered region spans residues 1–25; the sequence is MAEAAYTVASDSENTGEEKSSSSPS. At Ala-2 the chain carries N-acetylalanine.

It belongs to the heat shock protein 70 (TC 1.A.33) family. DnaK subfamily.

In terms of biological role, in cooperation with other chaperones, Hsp70s are key components that facilitate folding of de novo synthesized proteins, assist translocation of precursor proteins into organelles, and are responsible for degradation of damaged protein under stress conditions. In Arabidopsis thaliana (Mouse-ear cress), this protein is Heat shock 70 kDa protein 8 (HSP70-8).